Here is a 231-residue protein sequence, read N- to C-terminus: Large ribosomal subunit protein uL1 (231 aa).

The protein belongs to the universal ribosomal protein uL1 family. In terms of assembly, part of the 50S ribosomal subunit.

Functionally, binds directly to 23S rRNA. The L1 stalk is quite mobile in the ribosome, and is involved in E site tRNA release. Protein L1 is also a translational repressor protein, it controls the translation of the L11 operon by binding to its mRNA. This chain is Large ribosomal subunit protein uL1, found in Nitrosomonas eutropha (strain DSM 101675 / C91 / Nm57).